Consider the following 348-residue polypeptide: F(420)H(2) dehydrogenase subunit H (348 aa).

The next 8 helical transmembrane spans lie at 20-40, 93-113, 127-147, 172-192, 198-218, 259-279, 286-306, and 328-348; these read GVVG…AVWL, IFMM…AVFI, ISVL…FMIA, PLGI…IVEI, LLWN…ALMA, ILGS…PAFV, GLIA…MTII, and LLPL…YLGA.

The protein belongs to the complex I subunit 1 family. As to quaternary structure, the FPO complex is composed of at least 13 different subunits. FpoA, FpoH, FpoJ, FpoK, FpoL, FpoM and FpoN proteins constitute the membrane sector of the complex.

The protein resides in the cell membrane. The catalysed reaction is methanophenazine + reduced coenzyme F420-(gamma-L-Glu)(n) = dihydromethanophenazine + oxidized coenzyme F420-(gamma-L-Glu)(n) + H(+). In terms of biological role, component of the F(420)H(2) dehydrogenase (FPO complex) which is part of the energy-conserving F(420)H(2):heterodisulfide oxidoreductase system. The membrane-bound electron transfer system of the complex plays an important role in the metabolism of methylotrophic methanogens when the organisms grow on methanol or methylamines. Catalyzes the oxidation of methanophenazine to dihydromethanophenazine. It shuttles electrons from F(420)H(2), via FAD and iron-sulfur (Fe-S) centers, to methanophenazine (an electron carrier in the membrane). It couples the redox reaction to proton translocation (for every two electrons transferred, two hydrogen ions are translocated across the cytoplasmic membrane), and thus conserves the redox energy in a proton gradient. The polypeptide is F(420)H(2) dehydrogenase subunit H (Methanosarcina acetivorans (strain ATCC 35395 / DSM 2834 / JCM 12185 / C2A)).